The primary structure comprises 549 residues: Dihydroxy-acid dehydratase (549 aa).

Asp78 lines the Mg(2+) pocket. Position 119 (Cys119) interacts with [2Fe-2S] cluster. Residues Asp120 and Lys121 each coordinate Mg(2+). Residue Lys121 is modified to N6-carboxylysine. Cys191 serves as a coordination point for [2Fe-2S] cluster. Residue Glu441 coordinates Mg(2+). The active-site Proton acceptor is the Ser466.

It belongs to the IlvD/Edd family. Homodimer. The cofactor is [2Fe-2S] cluster. Mg(2+) serves as cofactor.

It catalyses the reaction (2R)-2,3-dihydroxy-3-methylbutanoate = 3-methyl-2-oxobutanoate + H2O. It carries out the reaction (2R,3R)-2,3-dihydroxy-3-methylpentanoate = (S)-3-methyl-2-oxopentanoate + H2O. The protein operates within amino-acid biosynthesis; L-isoleucine biosynthesis; L-isoleucine from 2-oxobutanoate: step 3/4. It functions in the pathway amino-acid biosynthesis; L-valine biosynthesis; L-valine from pyruvate: step 3/4. Its function is as follows. Functions in the biosynthesis of branched-chain amino acids. Catalyzes the dehydration of (2R,3R)-2,3-dihydroxy-3-methylpentanoate (2,3-dihydroxy-3-methylvalerate) into 2-oxo-3-methylpentanoate (2-oxo-3-methylvalerate) and of (2R)-2,3-dihydroxy-3-methylbutanoate (2,3-dihydroxyisovalerate) into 2-oxo-3-methylbutanoate (2-oxoisovalerate), the penultimate precursor to L-isoleucine and L-valine, respectively. The polypeptide is Dihydroxy-acid dehydratase (Methanosphaera stadtmanae (strain ATCC 43021 / DSM 3091 / JCM 11832 / MCB-3)).